The chain runs to 626 residues: Beta-galactosidase large subunit (626 aa).

Residue Glu-466 is the Proton donor of the active site. Residue Glu-534 is the Nucleophile of the active site.

This sequence belongs to the glycosyl hydrolase 2 family. Heterodimer of a large (LacL) and a small subunit (LacM).

The enzyme catalyses Hydrolysis of terminal non-reducing beta-D-galactose residues in beta-D-galactosides.. In terms of biological role, component of a beta-galactosidase that displays activity with the artificial chromogenic substrate o-nitrophenyl-beta-D-galactopyranoside (ONPG). This Leuconostoc lactis protein is Beta-galactosidase large subunit.